The chain runs to 381 residues: Creatine kinase M-type (381 aa).

One can recognise a Phosphagen kinase N-terminal domain in the interval 11 to 98 (KLNFKAEEEY…FDPIIQDRHG (88 aa)). A Phosphagen kinase C-terminal domain is found at 125–367 (YVLSSRVRTG…KLMVEMEKKL (243 aa)). 128–132 (SSRVR) is a binding site for ATP. Residue Ser-164 is modified to Phosphoserine. A Phosphothreonine modification is found at Thr-166. Ser-178 is subject to Phosphoserine. Position 180 is a phosphothreonine (Thr-180). Residue His-191 participates in ATP binding. Ser-199 is subject to Phosphoserine. ATP-binding residues include Arg-236 and Arg-292. A phosphothreonine mark is found at Thr-313 and Thr-322. ATP contacts are provided by residues 320-325 (RGTGGV) and Asp-335. Residue Ser-372 is modified to Phosphoserine.

This sequence belongs to the ATP:guanido phosphotransferase family. As to quaternary structure, dimer of identical or non-identical chains, which can be either B (brain type) or M (muscle type). With MM being the major form in skeletal muscle and myocardium, MB existing in myocardium, and BB existing in many tissues, especially brain.

The protein localises to the cytoplasm. The catalysed reaction is creatine + ATP = N-phosphocreatine + ADP + H(+). In terms of biological role, reversibly catalyzes the transfer of phosphate between ATP and various phosphogens (e.g. creatine phosphate). Creatine kinase isoenzymes play a central role in energy transduction in tissues with large, fluctuating energy demands, such as skeletal muscle, heart, brain and spermatozoa. The polypeptide is Creatine kinase M-type (CKM) (Bos taurus (Bovine)).